Reading from the N-terminus, the 344-residue chain is NADH-ubiquinone oxidoreductase chain 1 (344 aa).

10 helical membrane passes run Phe18–Ile38, Pro58–Leu78, Ile89–Ile109, Ile123–Gly143, Ala159–Cys179, Ile195–Glu215, Ala228–Leu248, Asn253–Phe273, Ile281–Val301, and Leu316–Leu336.

The protein belongs to the complex I subunit 1 family.

The protein resides in the mitochondrion inner membrane. It carries out the reaction a ubiquinone + NADH + 5 H(+)(in) = a ubiquinol + NAD(+) + 4 H(+)(out). Core subunit of the mitochondrial membrane respiratory chain NADH dehydrogenase (Complex I) that is believed to belong to the minimal assembly required for catalysis. Complex I functions in the transfer of electrons from NADH to the respiratory chain. The immediate electron acceptor for the enzyme is believed to be ubiquinone. This chain is NADH-ubiquinone oxidoreductase chain 1 (ND1), found in Cyanidium caldarium (Red alga).